A 300-amino-acid chain; its full sequence is Cation-efflux pump FieF (300 aa).

Transmembrane regions (helical) follow at residues 12 to 32, 39 to 59, 82 to 102, 114 to 134, 151 to 171, and 172 to 192; these read AAIA…FAWW, ILAA…NLLV, AALA…LTGI, PGVG…LVSF, MLHY…LALS, and WYGW…YILY. Positions 45 and 49 each coordinate Zn(2+). Zn(2+)-binding residues include His-153 and Asp-157.

This sequence belongs to the cation diffusion facilitator (CDF) transporter (TC 2.A.4) family. FieF subfamily. Homodimer.

Its subcellular location is the cell inner membrane. It catalyses the reaction Zn(2+)(in) + H(+)(out) = Zn(2+)(out) + H(+)(in). The enzyme catalyses Cd(2+)(in) + H(+)(out) = Cd(2+)(out) + H(+)(in). The catalysed reaction is Fe(2+)(in) + H(+)(out) = Fe(2+)(out) + H(+)(in). Its function is as follows. Divalent metal cation transporter which exports Zn(2+), Cd(2+) and possibly Fe(2+). May be involved in zinc and iron detoxification by efflux. This is Cation-efflux pump FieF from Escherichia fergusonii (strain ATCC 35469 / DSM 13698 / CCUG 18766 / IAM 14443 / JCM 21226 / LMG 7866 / NBRC 102419 / NCTC 12128 / CDC 0568-73).